Reading from the N-terminus, the 346-residue chain is Small ribosomal subunit biogenesis GTPase RsgA (346 aa).

A disordered region spans residues 1–26 (MAKRKLTQNQTRRIQSNNAKTLHRHK). Over residues 7 to 20 (TQNQTRRIQSNNAK) the composition is skewed to polar residues. Residues 103-271 (ENEISRPDYY…LIDSPGIREF (169 aa)) form the CP-type G domain. GTP is bound by residues 159-162 (NKVD) and 213-221 (GQSGVGKSS). The Zn(2+) site is built by Cys-295, Cys-300, His-302, and Cys-308.

The protein belongs to the TRAFAC class YlqF/YawG GTPase family. RsgA subfamily. In terms of assembly, monomer. Associates with 30S ribosomal subunit, binds 16S rRNA. The cofactor is Zn(2+).

The protein resides in the cytoplasm. Its function is as follows. One of several proteins that assist in the late maturation steps of the functional core of the 30S ribosomal subunit. Helps release RbfA from mature subunits. May play a role in the assembly of ribosomal proteins into the subunit. Circularly permuted GTPase that catalyzes slow GTP hydrolysis, GTPase activity is stimulated by the 30S ribosomal subunit. The chain is Small ribosomal subunit biogenesis GTPase RsgA from Haemophilus influenzae (strain PittGG).